A 384-amino-acid chain; its full sequence is Chaperone protein DnaJ (384 aa).

In terms of domain architecture, J spans 5-70; sequence DFYQVLGVSK…QKRQMYDQYG (66 aa). A CR-type zinc finger spans residues 138–216; the sequence is GKTVELEIPT…CHGHGRKEET (79 aa). Zn(2+) contacts are provided by C151, C154, C168, C171, C190, C193, C204, and C207. CXXCXGXG motif repeat units follow at residues 151–158, 168–175, 190–197, and 204–211; these read CRDCNGSG, CGHCHGSG, CPQCRGTG, and CRTCHGHG.

The protein belongs to the DnaJ family. Homodimer. It depends on Zn(2+) as a cofactor.

It is found in the cytoplasm. In terms of biological role, participates actively in the response to hyperosmotic and heat shock by preventing the aggregation of stress-denatured proteins and by disaggregating proteins, also in an autonomous, DnaK-independent fashion. Unfolded proteins bind initially to DnaJ; upon interaction with the DnaJ-bound protein, DnaK hydrolyzes its bound ATP, resulting in the formation of a stable complex. GrpE releases ADP from DnaK; ATP binding to DnaK triggers the release of the substrate protein, thus completing the reaction cycle. Several rounds of ATP-dependent interactions between DnaJ, DnaK and GrpE are required for fully efficient folding. Also involved, together with DnaK and GrpE, in the DNA replication of plasmids through activation of initiation proteins. The sequence is that of Chaperone protein DnaJ from Idiomarina loihiensis (strain ATCC BAA-735 / DSM 15497 / L2-TR).